The sequence spans 209 residues: Redox-sensing transcriptional repressor Rex (209 aa).

A DNA-binding region (H-T-H motif) is located at residues 16 to 55 (LYYRFIQNLSLSGKQRVSSAELSEAVKVDSATIRRDFSYF). 90–95 (GVGNLG) provides a ligand contact to NAD(+).

The protein belongs to the transcriptional regulatory Rex family. In terms of assembly, homodimer.

Its subcellular location is the cytoplasm. Its function is as follows. Modulates transcription in response to changes in cellular NADH/NAD(+) redox state. This Bacillus cereus (strain Q1) protein is Redox-sensing transcriptional repressor Rex.